A 193-amino-acid chain; its full sequence is 7-methyl-GTP pyrophosphatase (193 aa).

Catalysis depends on Asp-68, which acts as the Proton acceptor.

Belongs to the Maf family. YceF subfamily. A divalent metal cation serves as cofactor.

The protein localises to the cytoplasm. It catalyses the reaction N(7)-methyl-GTP + H2O = N(7)-methyl-GMP + diphosphate + H(+). Its function is as follows. Nucleoside triphosphate pyrophosphatase that hydrolyzes 7-methyl-GTP (m(7)GTP). May have a dual role in cell division arrest and in preventing the incorporation of modified nucleotides into cellular nucleic acids. In Chromobacterium violaceum (strain ATCC 12472 / DSM 30191 / JCM 1249 / CCUG 213 / NBRC 12614 / NCIMB 9131 / NCTC 9757 / MK), this protein is 7-methyl-GTP pyrophosphatase.